Consider the following 144-residue polypeptide: Superoxide dismutase [Mn] (144 aa).

The disordered stretch occupies residues glycine 1 to phenylalanine 22. Histidine 42, aspartate 124, and histidine 128 together coordinate Mn(2+).

Belongs to the iron/manganese superoxide dismutase family. Mn(2+) serves as cofactor.

The enzyme catalyses 2 superoxide + 2 H(+) = H2O2 + O2. Functionally, destroys superoxide anion radicals which are normally produced within the cells and which are toxic to biological systems. In Haloarcula hispanica, this protein is Superoxide dismutase [Mn] (sod).